Here is a 115-residue protein sequence, read N- to C-terminus: Large ribosomal subunit protein bL19 (115 aa).

This sequence belongs to the bacterial ribosomal protein bL19 family.

Functionally, this protein is located at the 30S-50S ribosomal subunit interface and may play a role in the structure and function of the aminoacyl-tRNA binding site. This Francisella tularensis subsp. tularensis (strain FSC 198) protein is Large ribosomal subunit protein bL19.